A 262-amino-acid chain; its full sequence is Cytochrome c oxidase subunit 3 (262 aa).

6 helical membrane passes run 39–59 (YTMT…YQWW), 83–103 (GMIL…WAFF), 120–140 (VGIA…ILLA), 163–183 (GLFF…YEYI), 201–221 (ATGF…ICFL), and 240–260 (AWYW…IYWW).

The protein belongs to the cytochrome c oxidase subunit 3 family. In terms of assembly, component of the cytochrome c oxidase (complex IV, CIV), a multisubunit enzyme composed of a catalytic core of 3 subunits and several supernumerary subunits. The complex exists as a monomer or a dimer and forms supercomplexes (SCs) in the inner mitochondrial membrane with ubiquinol-cytochrome c oxidoreductase (cytochrome b-c1 complex, complex III, CIII).

Its subcellular location is the mitochondrion inner membrane. It carries out the reaction 4 Fe(II)-[cytochrome c] + O2 + 8 H(+)(in) = 4 Fe(III)-[cytochrome c] + 2 H2O + 4 H(+)(out). Component of the cytochrome c oxidase, the last enzyme in the mitochondrial electron transport chain which drives oxidative phosphorylation. The respiratory chain contains 3 multisubunit complexes succinate dehydrogenase (complex II, CII), ubiquinol-cytochrome c oxidoreductase (cytochrome b-c1 complex, complex III, CIII) and cytochrome c oxidase (complex IV, CIV), that cooperate to transfer electrons derived from NADH and succinate to molecular oxygen, creating an electrochemical gradient over the inner membrane that drives transmembrane transport and the ATP synthase. Cytochrome c oxidase is the component of the respiratory chain that catalyzes the reduction of oxygen to water. Electrons originating from reduced cytochrome c in the intermembrane space (IMS) are transferred via the dinuclear copper A center (CU(A)) of subunit 2 and heme A of subunit 1 to the active site in subunit 1, a binuclear center (BNC) formed by heme A3 and copper B (CU(B)). The BNC reduces molecular oxygen to 2 water molecules using 4 electrons from cytochrome c in the IMS and 4 protons from the mitochondrial matrix. The polypeptide is Cytochrome c oxidase subunit 3 (COIII) (Anopheles gambiae (African malaria mosquito)).